The sequence spans 145 residues: Ribosomal RNA large subunit methyltransferase H (145 aa).

Residues Leu64, Gly93, and 112 to 117 (LSPLTF) each bind S-adenosyl-L-methionine.

The protein belongs to the RNA methyltransferase RlmH family. Homodimer.

The protein localises to the cytoplasm. It catalyses the reaction pseudouridine(1915) in 23S rRNA + S-adenosyl-L-methionine = N(3)-methylpseudouridine(1915) in 23S rRNA + S-adenosyl-L-homocysteine + H(+). Functionally, specifically methylates the pseudouridine at position 1915 (m3Psi1915) in 23S rRNA. The chain is Ribosomal RNA large subunit methyltransferase H from Prochlorococcus marinus (strain NATL2A).